An 81-amino-acid polypeptide reads, in one-letter code: Acyl carrier protein (81 aa).

The region spanning 2 to 77 (ASIEERVVDI…EAIDFIEKEK (76 aa)) is the Carrier domain. Residue Ser37 is modified to O-(pantetheine 4'-phosphoryl)serine.

Belongs to the acyl carrier protein (ACP) family. In terms of processing, 4'-phosphopantetheine is transferred from CoA to a specific serine of apo-ACP by AcpS. This modification is essential for activity because fatty acids are bound in thioester linkage to the sulfhydryl of the prosthetic group.

It localises to the cytoplasm. The protein operates within lipid metabolism; fatty acid biosynthesis. In terms of biological role, carrier of the growing fatty acid chain in fatty acid biosynthesis. The sequence is that of Acyl carrier protein from Rhodopirellula baltica (strain DSM 10527 / NCIMB 13988 / SH1).